The chain runs to 171 residues: NADH-ubiquinone oxidoreductase chain 6 (171 aa).

5 helical membrane passes run 1–21, 25–44, 49–71, 85–105, and 150–170; these read MYVM…ISSK, IYGG…IIMG, FMGL…YTTA, VVIW…VAWM, and WFAA…IEII.

This sequence belongs to the complex I subunit 6 family. In terms of assembly, core subunit of respiratory chain NADH dehydrogenase (Complex I) which is composed of 45 different subunits.

The protein localises to the mitochondrion inner membrane. The enzyme catalyses a ubiquinone + NADH + 5 H(+)(in) = a ubiquinol + NAD(+) + 4 H(+)(out). Functionally, core subunit of the mitochondrial membrane respiratory chain NADH dehydrogenase (Complex I) which catalyzes electron transfer from NADH through the respiratory chain, using ubiquinone as an electron acceptor. Essential for the catalytic activity and assembly of complex I. The protein is NADH-ubiquinone oxidoreductase chain 6 (MT-ND6) of Lemur catta (Ring-tailed lemur).